Here is a 154-residue protein sequence, read N- to C-terminus: Small ribosomal subunit protein bS6 (154 aa).

Positions 94–154 (VKQEGPLPTP…SSQGKESQKS (61 aa)) are disordered. Polar residues predominate over residues 103 to 112 (PRSSNKGYNQ). A compositionally biased stretch (basic and acidic residues) spans 113–139 (SEKKDIESIDSTNKSEFKEEANDKKTA). Residues 140 to 154 (TSESTSSQGKESQKS) show a composition bias toward polar residues.

It belongs to the bacterial ribosomal protein bS6 family.

Binds together with bS18 to 16S ribosomal RNA. The chain is Small ribosomal subunit protein bS6 from Prochlorococcus marinus subsp. pastoris (strain CCMP1986 / NIES-2087 / MED4).